The chain runs to 376 residues: Protein-glutamate methylesterase/protein-glutamine glutaminase (376 aa).

Residues 4-121 (KVLVVDDSSF…ARNRDEAVSL (118 aa)) enclose the Response regulatory domain. 4-aspartylphosphate is present on Asp-55. The disordered stretch occupies residues 142-161 (SSQSTSTVESRTATTRTATS). A compositionally biased stretch (low complexity) spans 145 to 161 (STSTVESRTATTRTATS). One can recognise a CheB-type methylesterase domain in the interval 183 to 376 (TGKKYQLTAI…ERMLVEVGLK (194 aa)). Catalysis depends on residues Ser-195, His-222, and Asp-318.

Belongs to the CheB family. Phosphorylated by CheA. Phosphorylation of the N-terminal regulatory domain activates the methylesterase activity.

It is found in the cytoplasm. The enzyme catalyses [protein]-L-glutamate 5-O-methyl ester + H2O = L-glutamyl-[protein] + methanol + H(+). It carries out the reaction L-glutaminyl-[protein] + H2O = L-glutamyl-[protein] + NH4(+). Functionally, involved in chemotaxis. Part of a chemotaxis signal transduction system that modulates chemotaxis in response to various stimuli. Catalyzes the demethylation of specific methylglutamate residues introduced into the chemoreceptors (methyl-accepting chemotaxis proteins or MCP) by CheR. Also mediates the irreversible deamidation of specific glutamine residues to glutamic acid. This Aliivibrio fischeri (strain ATCC 700601 / ES114) (Vibrio fischeri) protein is Protein-glutamate methylesterase/protein-glutamine glutaminase.